Here is a 22-residue protein sequence, read N- to C-terminus: Mu-conotoxin CnIIIC (22 aa).

Gln-1 is modified (pyrrolidone carboxylic acid; partial). Intrachain disulfides connect Cys-3/Cys-15, Cys-4/Cys-21, and Cys-10/Cys-22. The residue at position 22 (Cys-22) is a Cysteine amide.

Belongs to the conotoxin M superfamily. Expressed by the venom duct.

The protein localises to the secreted. Its function is as follows. Mu-conotoxins block voltage-gated sodium channels (Nav). This synthetic toxin blocks both voltage-gated sodium channels and nicotinic acetylcholine receptor (nAChR). Inhibits the skeletal muscle rNav1.4/SCN4A (IC(50)=1.3 nM) and the brain rNav1.2/SCN2A in a long-lasting manner. A low inhibition is also observed on neuronal mNav1.6/SCN8A and mNav1.7/SCN9A. Modestly blocks nAChR alpha-3/beta-2 subtype (IC(50)=450 nM) (partially reversible) and, to a lesser extent, alpha-7 and alpha-4/beta-2 subtypes (reversible). In vitro, decreases twitch tension in mouse hemidiaphragms (IC(50)=150 nM), and displays a high blocking effect in mouse extensor digitorum longus muscles (IC(50)=46 nM). This Conus consors (Singed cone) protein is Mu-conotoxin CnIIIC.